Here is a 699-residue protein sequence, read N- to C-terminus: Auxin response factor 1 (699 aa).

Positions 122–224 form a DNA-binding region, TF-B3; it reads FCKILTPSDT…EQRVGVRRLV (103 aa). Disordered regions lie at residues 539-565 and 680-699; these read TTTD…DSGQ and EPHP…KTGF. The 90-residue stretch at 595–684 folds into the PB1 domain; sequence RTRIKVQMHG…DEKKIEPHPK (90 aa). Residues 687–699 are compositionally biased toward polar residues; sequence SSANPEQDQKTGF.

Belongs to the ARF family. In terms of assembly, homodimers and heterodimers. As to expression, expressed in roots, culms, leaves and young panicles.

It is found in the nucleus. Auxin response factors (ARFs) are transcriptional factors that bind specifically to the DNA sequence 5'-TGTCTC-3' found in the auxin-responsive promoter elements (AuxREs). In Oryza sativa subsp. japonica (Rice), this protein is Auxin response factor 1 (ARF1).